Reading from the N-terminus, the 163-residue chain is Large ribosomal subunit protein uL10 (163 aa).

It belongs to the universal ribosomal protein uL10 family. In terms of assembly, part of the ribosomal stalk of the 50S ribosomal subunit. The N-terminus interacts with L11 and the large rRNA to form the base of the stalk. The C-terminus forms an elongated spine to which L12 dimers bind in a sequential fashion forming a multimeric L10(L12)X complex.

In terms of biological role, forms part of the ribosomal stalk, playing a central role in the interaction of the ribosome with GTP-bound translation factors. The protein is Large ribosomal subunit protein uL10 of Actinobacillus pleuropneumoniae serotype 5b (strain L20).